A 37-amino-acid polypeptide reads, in one-letter code: DHGESFQMLESGRQMGMNVISAKYNLVTSQTRDSSYK.

In Pseudotsuga menziesii (Douglas-fir), this protein is Unknown protein 25.